The primary structure comprises 72 residues: MLCPTHGPTTWNPHSCTVVEKCITNLLITTILLCFFNATTYWKLFFGAMFDFIHYQLLFRNSLSEILLLGLG.

Residues 23 to 45 (ITNLLITTILLCFFNATTYWKLF) traverse the membrane as a helical segment.

It is found in the membrane. This is an uncharacterized protein from Schizosaccharomyces pombe (strain 972 / ATCC 24843) (Fission yeast).